Consider the following 120-residue polypeptide: Chaperonin GroEL (120 aa).

23–27 (DGTTT) is an ATP binding site.

It belongs to the chaperonin (HSP60) family. Forms a cylinder of 14 subunits composed of two heptameric rings stacked back-to-back. Interacts with the co-chaperonin GroES.

The protein localises to the cytoplasm. The enzyme catalyses ATP + H2O + a folded polypeptide = ADP + phosphate + an unfolded polypeptide.. In terms of biological role, together with its co-chaperonin GroES, plays an essential role in assisting protein folding. The GroEL-GroES system forms a nano-cage that allows encapsulation of the non-native substrate proteins and provides a physical environment optimized to promote and accelerate protein folding. This is Chaperonin GroEL from Mycobacterium gordonae.